The following is a 387-amino-acid chain: Chorismate synthase (387 aa).

Residues arginine 39 and arginine 45 each coordinate NADP(+). A disordered region spans residues 92 to 113; that stretch reads PVEEGSEEKRRVSRPRPGHADL. Residues 130-132, 250-251, glycine 295, 310-314, and arginine 336 contribute to the FMN site; these read RSS, QA, and KPIPT.

Belongs to the chorismate synthase family. As to quaternary structure, homotetramer. FMNH2 is required as a cofactor.

It catalyses the reaction 5-O-(1-carboxyvinyl)-3-phosphoshikimate = chorismate + phosphate. It functions in the pathway metabolic intermediate biosynthesis; chorismate biosynthesis; chorismate from D-erythrose 4-phosphate and phosphoenolpyruvate: step 7/7. Catalyzes the anti-1,4-elimination of the C-3 phosphate and the C-6 proR hydrogen from 5-enolpyruvylshikimate-3-phosphate (EPSP) to yield chorismate, which is the branch point compound that serves as the starting substrate for the three terminal pathways of aromatic amino acid biosynthesis. This reaction introduces a second double bond into the aromatic ring system. The chain is Chorismate synthase from Brevibacillus brevis (strain 47 / JCM 6285 / NBRC 100599).